The following is a 148-amino-acid chain: uncharacterized protein (148 aa).

2 consecutive transmembrane segments (helical) span residues 16-36 (IVGA…SIIL) and 41-61 (LSFS…AYIF).

To M.jannaschii MJ0696.

It localises to the cell membrane. This is an uncharacterized protein from Methanocaldococcus jannaschii (strain ATCC 43067 / DSM 2661 / JAL-1 / JCM 10045 / NBRC 100440) (Methanococcus jannaschii).